A 708-amino-acid chain; its full sequence is Leukotoxin translocation ATP-binding protein LktB (708 aa).

The Peptidase C39 domain occupies 1-126 (MEVNHQSNDL…SCYQGKIILV (126 aa)). Residues 155–437 (FLETLLVSIF…LAQLWQDFTQ (283 aa)) enclose the ABC transmembrane type-1 domain. Helical transmembrane passes span 159-179 (LLVS…FQVV), 192-212 (LNII…LSGL), 270-290 (ALTS…MWYY), 296-316 (LVIL…SPIL), and 389-409 (VMVI…LSIG). Positions 469-704 (IAFKNIRFRY…NNGLYSYLHQ (236 aa)) constitute an ABC transporter domain. 503 to 510 (GRSGSGKS) lines the ATP pocket.

The protein belongs to the ABC transporter superfamily. Protein-1 exporter (TC 3.A.1.109) family. In terms of assembly, homodimer.

The protein localises to the cell inner membrane. It carries out the reaction ATP + H2O + proteinSide 1 = ADP + phosphate + proteinSide 2.. Its function is as follows. Part of the ABC transporter complex LktBD involved in leukotoxin export. Transmembrane domains (TMD) form a pore in the inner membrane and the ATP-binding domain (NBD) is responsible for energy generation. This Pasteurella haemolytica-like sp. (strain 5943B) protein is Leukotoxin translocation ATP-binding protein LktB (lktB).